A 96-amino-acid polypeptide reads, in one-letter code: Co-chaperonin GroES (96 aa).

Belongs to the GroES chaperonin family. In terms of assembly, heptamer of 7 subunits arranged in a ring. Interacts with the chaperonin GroEL.

Its subcellular location is the cytoplasm. Together with the chaperonin GroEL, plays an essential role in assisting protein folding. The GroEL-GroES system forms a nano-cage that allows encapsulation of the non-native substrate proteins and provides a physical environment optimized to promote and accelerate protein folding. GroES binds to the apical surface of the GroEL ring, thereby capping the opening of the GroEL channel. In Actinobacillus succinogenes (strain ATCC 55618 / DSM 22257 / CCUG 43843 / 130Z), this protein is Co-chaperonin GroES.